The sequence spans 81 residues: Probable small nuclear ribonucleoprotein G (81 aa).

The Sm domain maps to 5–76 (GQPPALKKYM…VVTVEALEPV (72 aa)).

The protein belongs to the snRNP Sm proteins family.

The protein resides in the nucleus. Probable common Sm protein, is found in U1 and U2 snRNPs and may be part of the spliceosome. The polypeptide is Probable small nuclear ribonucleoprotein G (C29) (Medicago sativa (Alfalfa)).